A 101-amino-acid polypeptide reads, in one-letter code: DNA-binding protein Fis (101 aa).

The H-T-H motif DNA-binding region spans 77-96 (QTRAANMLGINRGTLRKKLK).

Belongs to the transcriptional regulatory Fis family. Homodimer.

Its function is as follows. Activates ribosomal RNA transcription. Plays a direct role in upstream activation of rRNA promoters. This is DNA-binding protein Fis from Shewanella baltica (strain OS223).